A 585-amino-acid chain; its full sequence is Nucleus accumbens-associated protein 2 (585 aa).

The 65-residue stretch at 30 to 94 (CDVSIVVKGQ…CYTGKLTMAA (65 aa)) folds into the BTB domain. Residues lysine 171 and lysine 215 each participate in a glycyl lysine isopeptide (Lys-Gly) (interchain with G-Cter in SUMO2) cross-link. Polar residues predominate over residues 238 to 261 (PYPQGERTSPGASSLPTTDSSTSY). The tract at residues 238–269 (PYPQGERTSPGASSLPTTDSSTSYHNEDEDDD) is disordered. Residues lysine 296, lysine 426, and lysine 453 each participate in a glycyl lysine isopeptide (Lys-Gly) (interchain with G-Cter in SUMO2) cross-link. One can recognise a BEN domain in the interval 348–445 (GSGVYITRGQ…DMCTNARRVR (98 aa)). Residues 541-585 (APEQLPADGQSSPQAFEQGNTSSSRPQTPVATATRRPEGTYAGTL) are disordered. The segment covering 549-571 (GQSSPQAFEQGNTSSSRPQTPVA) has biased composition (polar residues).

As to quaternary structure, homooligomer; mediated by the BTB domain. Interacts with the NuRD complex. Interacts (via C-terminal part) with HDAC2. Interacts (via BTB domain) with MTA1, MTA2 and MTA3.

It is found in the nucleus. Functions as a transcriptional repressor through its association with the NuRD complex. Recruits the NuRD complex to the promoter of MDM2, leading to the repression of MDM2 transcription and subsequent stability of p53/TP53. The chain is Nucleus accumbens-associated protein 2 (Nacc2) from Rattus norvegicus (Rat).